The primary structure comprises 533 residues: Inositol-3-phosphate synthase (533 aa).

Residue Thr-48 is modified to Phosphothreonine. Residues Gly-74, Gly-75, Asn-76, Asn-77, and Asp-148 each contribute to the NAD(+) site. A phosphoserine mark is found at Ser-177 and Ser-184. 17 residues coordinate NAD(+): Ser-184, Ile-185, Gln-195, Asp-196, Arg-198, Thr-244, Ala-245, Asn-246, Thr-247, Gly-295, Ser-296, Asp-320, Leu-321, Ser-323, Asn-354, Asn-355, and Asp-356. Ser-296 carries the post-translational modification Phosphoserine. The residue at position 368 (Ser-368) is a Phosphoserine. Lys-369 contributes to the NAD(+) binding site. Ser-374 carries the post-translational modification Phosphoserine. NAD(+) contacts are provided by Gly-409, Asp-410, Asp-438, and Ser-439.

The protein belongs to the myo-inositol 1-phosphate synthase family. As to quaternary structure, homotetramer. It depends on NAD(+) as a cofactor. Phosphorylation at Ser-184 and Ser-374 is associated with a decrease in activity. Increasingly phosphorylated in presence of valproate.

It localises to the cytoplasm. The enzyme catalyses D-glucose 6-phosphate = 1D-myo-inositol 3-phosphate. It participates in polyol metabolism; myo-inositol biosynthesis; myo-inositol from D-glucose 6-phosphate: step 1/2. Its activity is regulated as follows. Competitively inhibited by myo-2-inosose 1-phosphate, which is also an intermediate in the catalytic reaction. Competitively inhibited by 2-deoxy-myo-inositol 1-phosphate (dMIP), 1-deoxy-1-(phosphonomethyl)-myo-2-inosose (DPMI), dihydroxyacetone phosphate (DHAP), 6-deoxy-D-glucose 6-(E)-vinylhomophosphonate, 6-deoxy-D-glucitol 6-(E)-vinylhomophosphonate, 2,6-dideoxy-D-glucose 6-(E)-vinylhomophosphonate and 2,6-dideoxy-D-glucitol 6-(E)-vinylhomophosphonate. Inhibited by 2-deoxyglucitol 6-phosphate (dgtolP). Functionally, key enzyme in myo-inositol biosynthesis pathway that catalyzes the conversion of glucose 6-phosphate to 1-myo-inositol 1-phosphate in a NAD-dependent manner. Rate-limiting enzyme in the synthesis of all inositol-containing compounds. The protein is Inositol-3-phosphate synthase (INO1) of Saccharomyces cerevisiae (strain ATCC 204508 / S288c) (Baker's yeast).